The following is a 255-amino-acid chain: Putative transcription factor D5 (255 aa).

In terms of biological role, putative transcription factor required for the expression of viral late genes. This Escherichia coli (Enterobacteria phage T5) protein is Putative transcription factor D5.